The following is a 165-amino-acid chain: Putative BTB/POZ domain-containing protein At2g40440 (165 aa).

Residues 24–98 (VDVRLKAGDS…IYSDGSMLSA (75 aa)) enclose the BTB domain.

Its pathway is protein modification; protein ubiquitination. In terms of biological role, may act as a substrate-specific adapter of an E3 ubiquitin-protein ligase complex (CUL3-RBX1-BTB) which mediates the ubiquitination and subsequent proteasomal degradation of target proteins. This is Putative BTB/POZ domain-containing protein At2g40440 from Arabidopsis thaliana (Mouse-ear cress).